The following is a 97-amino-acid chain: CRISPR-associated endoribonuclease Cas2 1 (97 aa).

Asp12 lines the Mg(2+) pocket.

Belongs to the CRISPR-associated endoribonuclease Cas2 protein family. As to quaternary structure, homodimer, forms a heterotetramer with a Cas1 homodimer. It depends on Mg(2+) as a cofactor.

Its function is as follows. CRISPR (clustered regularly interspaced short palindromic repeat) is an adaptive immune system that provides protection against mobile genetic elements (viruses, transposable elements and conjugative plasmids). CRISPR clusters contain sequences complementary to antecedent mobile elements and target invading nucleic acids. CRISPR clusters are transcribed and processed into CRISPR RNA (crRNA). Functions as a ssRNA-specific endoribonuclease. Involved in the integration of spacer DNA into the CRISPR cassette. This chain is CRISPR-associated endoribonuclease Cas2 1, found in Francisella tularensis subsp. novicida (strain U112).